Reading from the N-terminus, the 907-residue chain is Lipoxygenase 1, chloroplastic (907 aa).

The transit peptide at 1–49 directs the protein to the chloroplast; it reads MALAKQIMGASLMDQKTSVFGSNLCLNHVLVNKHRLRLRKTRKNGSMVV. Residues 85–209 form the PLAT domain; it reads DFFKDTIFRK…DLPNPRIFFT (125 aa). The Lipoxygenase domain occupies 212–907; that stretch reads PYLPDETPVG…CRGVPNSISI (696 aa). His-567, His-572, His-758, Asn-762, and Ile-907 together coordinate Fe cation.

The protein belongs to the lipoxygenase family. Fe cation serves as cofactor. Confined to glandular trichomes in flowers, and, at low levels, in leaves.

The protein localises to the plastid. It is found in the chloroplast. It catalyses the reaction (9Z,12Z,15Z)-octadecatrienoate + O2 = 13-hydroperoxy-(9Z,11E,15Z)-octadecatrienoate. Its pathway is lipid metabolism; oxylipin biosynthesis. It participates in isoprenoid biosynthesis. Functionally, component of the monoterpenoid pyrethrins biosynthesis; pyrethrins are widely used plant-derived pesticide. Plant lipoxygenases may be involved in a number of diverse aspects of plant physiology including growth and development, pest resistance, and senescence or responses to wounding. Catalyzes the hydroperoxidation of lipids containing a cis,cis-1,4-pentadiene structure. Mediates the peroxidation of linolenic acid leading to the production of 13-hydroperoxylinolenic acid. The protein is Lipoxygenase 1, chloroplastic of Tanacetum cinerariifolium (Dalmatian daisy).